Consider the following 214-residue polypeptide: Immunoglobulin lambda-like polypeptide 5 (214 aa).

Positions M1–A35 are cleaved as a signal peptide. The tract at residues V98 to G109 is j region. The segment at Q110–S214 is c region. In terms of domain architecture, Ig-like C1-type spans P115 to A209. A disulfide bridge connects residues C136 and C195.

Contrary to IGLL1, not expressed in pre-B-cells.

Its subcellular location is the secreted. The chain is Immunoglobulin lambda-like polypeptide 5 (IGLL5) from Homo sapiens (Human).